The primary structure comprises 343 residues: Transmembrane protein 120A (343 aa).

At 1–132 the chain is on the cytoplasmic side; sequence MQPPPPGPLG…KQAKFAYKDE (132 aa). Lys-130 is a binding site for CoA. The chain crosses the membrane as a helical span at residues 133–152; the sequence is YEKFKLYLTIILILISFTCR. Over 153–158 the chain is Extracellular; the sequence is FLLNSR. Residues 159–177 form a helical membrane-spanning segment; that stretch reads VTDAAFNFLLVWYYCTLTI. Residues 178-190 lie on the Cytoplasmic side of the membrane; it reads RESILINNGSRIK. Residues Ser-187 and Arg-188 each contribute to the CoA site. Residues 191-209 traverse the membrane as a helical segment; sequence GWWVFHHYVSTFLSGVMLT. The Extracellular segment spans residues 210–218; the sequence is WPDGLMYQK. The chain crosses the membrane as a helical span at residues 219-240; sequence FRNQFLSFSMYQSFVQFLQYYY. CoA is bound by residues Gln-237, Tyr-240, Gln-241, and His-283. The Cytoplasmic portion of the chain corresponds to 241-270; that stretch reads QSGCLYRLRALGERHTMDLTVEGFQSWMWR. Residues 271–294 form a helical membrane-spanning segment; the sequence is GLTFLLPFLFFGHFWQLFNALTLF. The Extracellular portion of the chain corresponds to 295-304; sequence NLAQDPQCKE. A helical membrane pass occupies residues 305 to 330; that stretch reads WQVLMCGFPFLLLFLGNFFTTLRVVH. Topologically, residues 331–343 are cytoplasmic; it reads HKFHSQRHGSKKD. Lys-332 serves as a coordination point for CoA.

This sequence belongs to the TMEM120 family. As to quaternary structure, homodimer. Forms heterooligomer with TMEM120B. Interacts with PKD2; TMEM120A inhibits PKD2 channel activity through the physical association of PKD2 with TMEM120A. Interacts (via C-terminal domain) with STING1; regulates the trafficking of STING1 from the ER to the ER-Golgi intermediate compartment to elicit antiviral effects. Expressed in nociceptors.

It is found in the cell membrane. The protein resides in the nucleus inner membrane. The protein localises to the endoplasmic reticulum. In terms of biological role, multifunctional protein involved in mechanosensation, and plays an essential role in lipid metabolism and adipocyte differentiation. May function as a potential ion channel involved in sensing mechanical stimuli. Mediates the mechanosensitivity of the PKD2-TMEM120A channel complex through direct physical interaction. TMEM120A seems to affect mechanosensation by inhibiting PIEZO2 channels, possibly by altering cellular lipid content. TMEM120A is structurally similar to a lipid-modifying enzyme, ELOVL7, and contains a bound coenzyme A molecule, which suggests it might function as an enzyme in lipid metabolism. Additionnaly, implicated in innate immune response against Zika virus. Acts as a key activator of the antiviral signaling involving STING1. In Homo sapiens (Human), this protein is Transmembrane protein 120A.